We begin with the raw amino-acid sequence, 729 residues long: Fatty acid oxidation complex subunit alpha (729 aa).

An enoyl-CoA hydratase/isomerase region spans residues 1 to 189 (MLYQSETLQL…KIGLVDAVVD (189 aa)). Aspartate 296 lines the substrate pocket. The tract at residues 311–729 (AAPKLAAVLG…LLDVSTNQPA (419 aa)) is 3-hydroxyacyl-CoA dehydrogenase. NAD(+) contacts are provided by residues methionine 324, aspartate 343, 400–402 (VVE), lysine 407, and serine 429. Histidine 450 serves as the catalytic For 3-hydroxyacyl-CoA dehydrogenase activity. Asparagine 453 lines the NAD(+) pocket. Substrate contacts are provided by asparagine 500 and tyrosine 660.

It in the N-terminal section; belongs to the enoyl-CoA hydratase/isomerase family. The protein in the C-terminal section; belongs to the 3-hydroxyacyl-CoA dehydrogenase family. In terms of assembly, heterotetramer of two alpha chains (FadB) and two beta chains (FadA).

The enzyme catalyses a (3S)-3-hydroxyacyl-CoA + NAD(+) = a 3-oxoacyl-CoA + NADH + H(+). It catalyses the reaction a (3S)-3-hydroxyacyl-CoA = a (2E)-enoyl-CoA + H2O. The catalysed reaction is a 4-saturated-(3S)-3-hydroxyacyl-CoA = a (3E)-enoyl-CoA + H2O. It carries out the reaction (3S)-3-hydroxybutanoyl-CoA = (3R)-3-hydroxybutanoyl-CoA. The enzyme catalyses a (3Z)-enoyl-CoA = a 4-saturated (2E)-enoyl-CoA. It catalyses the reaction a (3E)-enoyl-CoA = a 4-saturated (2E)-enoyl-CoA. Its pathway is lipid metabolism; fatty acid beta-oxidation. Involved in the aerobic and anaerobic degradation of long-chain fatty acids via beta-oxidation cycle. Catalyzes the formation of 3-oxoacyl-CoA from enoyl-CoA via L-3-hydroxyacyl-CoA. It can also use D-3-hydroxyacyl-CoA and cis-3-enoyl-CoA as substrate. The polypeptide is Fatty acid oxidation complex subunit alpha (Yersinia pestis bv. Antiqua (strain Antiqua)).